Reading from the N-terminus, the 223-residue chain is Phosphoribosylformylglycinamidine synthase subunit PurQ (223 aa).

Residues 2–223 (KFAVIQFPGS…ASVLKNFVGK (222 aa)) enclose the Glutamine amidotransferase type-1 domain. The active-site Nucleophile is the cysteine 86. Active-site residues include histidine 195 and glutamate 197.

As to quaternary structure, part of the FGAM synthase complex composed of 1 PurL, 1 PurQ and 2 PurS subunits.

It localises to the cytoplasm. It catalyses the reaction N(2)-formyl-N(1)-(5-phospho-beta-D-ribosyl)glycinamide + L-glutamine + ATP + H2O = 2-formamido-N(1)-(5-O-phospho-beta-D-ribosyl)acetamidine + L-glutamate + ADP + phosphate + H(+). The catalysed reaction is L-glutamine + H2O = L-glutamate + NH4(+). The protein operates within purine metabolism; IMP biosynthesis via de novo pathway; 5-amino-1-(5-phospho-D-ribosyl)imidazole from N(2)-formyl-N(1)-(5-phospho-D-ribosyl)glycinamide: step 1/2. Part of the phosphoribosylformylglycinamidine synthase complex involved in the purines biosynthetic pathway. Catalyzes the ATP-dependent conversion of formylglycinamide ribonucleotide (FGAR) and glutamine to yield formylglycinamidine ribonucleotide (FGAM) and glutamate. The FGAM synthase complex is composed of three subunits. PurQ produces an ammonia molecule by converting glutamine to glutamate. PurL transfers the ammonia molecule to FGAR to form FGAM in an ATP-dependent manner. PurS interacts with PurQ and PurL and is thought to assist in the transfer of the ammonia molecule from PurQ to PurL. This is Phosphoribosylformylglycinamidine synthase subunit PurQ from Lactococcus lactis subsp. lactis (strain IL1403) (Streptococcus lactis).